A 52-amino-acid chain; its full sequence is Creatine kinase B-type (52 aa).

The Phosphagen kinase C-terminal domain maps to 1–52 (AKVLTLDLYKKLRDKSTPSGFTLDDIIQNEHLGYVLTCPSNLGTXLRAXVHV). The Phosphagen kinase N-terminal domain occupies 1–52 (AKVLTLDLYKKLRDKSTPSGFTLDDIIQNEHLGYVLTCPSNLGTXLRAXVHV). Residues R13 and R47 each coordinate ATP.

Belongs to the ATP:guanido phosphotransferase family. In terms of assembly, dimer of identical or non-identical chains, which can be either B (brain type) or M (muscle type). With MM being the major form in skeletal muscle and myocardium, MB existing in myocardium, and BB existing in many tissues, especially brain. As to expression, expressed in rectal gland, brain, skeletal muscle (at protein level).

The protein localises to the cytoplasm. It localises to the cytosol. It is found in the mitochondrion. The protein resides in the basal cell membrane. It carries out the reaction creatine + ATP = N-phosphocreatine + ADP + H(+). Functionally, reversibly catalyzes the transfer of phosphate between ATP and various phosphogens (e.g. creatine phosphate). Creatine kinase isoenzymes play a central role in energy transduction in tissues with large, fluctuating energy demands, such as skeletal muscle, heart, brain and spermatozoa. The polypeptide is Creatine kinase B-type (Squalus acanthias (Spiny dogfish)).